The chain runs to 105 residues: Sulfite reductase, dissimilatory-type subunit gamma (105 aa).

This sequence belongs to the DsrC/TusE family. In terms of assembly, heterohexamer of two alpha, two beta and two gamma subunits.

Its subcellular location is the cytoplasm. It carries out the reaction [DsrC protein]-trisulfide + NAD(+) + 3 H2O = [DsrC protein]-dithiol + sulfite + NADH + 3 H(+). Catalyzes the reduction of sulfite to sulfide. This is the terminal oxidation reaction in sulfate respiration, a process catalyzed by the sulfate-reducing bacteria. The protein is Sulfite reductase, dissimilatory-type subunit gamma (dsvC) of Nitratidesulfovibrio vulgaris (strain ATCC 29579 / DSM 644 / CCUG 34227 / NCIMB 8303 / VKM B-1760 / Hildenborough) (Desulfovibrio vulgaris).